We begin with the raw amino-acid sequence, 262 residues long: Small ribosomal subunit protein uS2 (262 aa).

It belongs to the universal ribosomal protein uS2 family.

The chain is Small ribosomal subunit protein uS2 from Borreliella burgdorferi (strain ZS7) (Borrelia burgdorferi).